The following is a 1398-amino-acid chain: DNA-directed RNA polymerase subunit beta' (1398 aa).

The Zn(2+) site is built by cysteine 70, cysteine 72, cysteine 85, and cysteine 88. 3 residues coordinate Mg(2+): aspartate 460, aspartate 462, and aspartate 464. Positions 814, 888, 895, and 898 each coordinate Zn(2+).

Belongs to the RNA polymerase beta' chain family. In terms of assembly, the RNAP catalytic core consists of 2 alpha, 1 beta, 1 beta' and 1 omega subunit. When a sigma factor is associated with the core the holoenzyme is formed, which can initiate transcription. Mg(2+) is required as a cofactor. Requires Zn(2+) as cofactor.

It catalyses the reaction RNA(n) + a ribonucleoside 5'-triphosphate = RNA(n+1) + diphosphate. Its function is as follows. DNA-dependent RNA polymerase catalyzes the transcription of DNA into RNA using the four ribonucleoside triphosphates as substrates. This is DNA-directed RNA polymerase subunit beta' from Pseudomonas putida (Arthrobacter siderocapsulatus).